Consider the following 240-residue polypeptide: Cell division control protein 14 (240 aa).

Interacts with sid1.

The protein localises to the cytoplasm. The protein resides in the cytoskeleton. Its subcellular location is the microtubule organizing center. It localises to the spindle pole body. In terms of biological role, has a role in the septation initiation network (SIN) required for cytokinesis. The protein is Cell division control protein 14 (cdc14) of Schizosaccharomyces pombe (strain 972 / ATCC 24843) (Fission yeast).